The primary structure comprises 128 residues: Deoxycytidylate deaminase (128 aa).

Positions 5–128 constitute a CMP/dCMP-type deaminase domain; the sequence is DWDEYFLGIA…IERVVYPKES (124 aa). His81 is a binding site for Zn(2+). Glu83 serves as the catalytic Proton donor. Zn(2+) is bound by residues Cys107 and Cys110.

The protein belongs to the cytidine and deoxycytidylate deaminase family.

It catalyses the reaction dCMP + H2O + H(+) = dUMP + NH4(+). This chain is Deoxycytidylate deaminase (36.1), found in Mycobacterium (Mycobacteriophage D29).